The sequence spans 529 residues: Zinc finger protein 490 (529 aa).

The disordered stretch occupies residues 1–53 (MRRNSSLSFQMERPLEEQVQSKWSSSQGRTGTGGSDVLQMQNSEHHGQSIKTQ). Residues 57–132 (ISLEDVAVNF…ALCENKEDCP (76 aa)) form the KRAB domain. 13 C2H2-type zinc fingers span residues 156 to 178 (CDCSVCGEVFMHQVSLNRHMRSH), 194 to 216 (HKCKECGKTFTRSSSIRTHERIH), 222 to 244 (YECKECGKAFAFLFSFRNHIRIH), 250 to 272 (YECKECGKAFRYLTALRRHEKNH), 278 to 300 (YKCKQCGKAFIYYQPFLTHERTH), 306 to 328 (YECKQCGKAFSCPTYLRSHEKTH), 334 to 356 (FVCRECGRAFFSHSSLRKHVKTH), 362 to 384 (YTCKKCGEAFKSSSSCEVHERTH), 390 to 412 (YECKQCGKAFNSSSYLQLHERVH), 418 to 440 (YECKECGKAFLYSTHFRIHERTH), 446 to 468 (YECKQCGRVFIYFSHLRRHERSH), 474 to 496 (CECKQCGKAFTCLNSLKVHKRIH), and 502 to 524 (FQCRQCGKAFSYSKSLHVHERTH).

It belongs to the krueppel C2H2-type zinc-finger protein family.

The protein resides in the nucleus. May be involved in transcriptional regulation. The chain is Zinc finger protein 490 (ZNF490) from Homo sapiens (Human).